The primary structure comprises 921 residues: Isoleucine--tRNA ligase (921 aa).

Positions 57–67 (PYANGDIHMGH) match the 'HIGH' region motif. Residue glutamate 552 participates in L-isoleucyl-5'-AMP binding. A 'KMSKS' region motif is present at residues 593-597 (KMSKS). An ATP-binding site is contributed by lysine 596. Positions 888, 891, 908, and 911 each coordinate Zn(2+).

This sequence belongs to the class-I aminoacyl-tRNA synthetase family. IleS type 1 subfamily. In terms of assembly, monomer. The cofactor is Zn(2+).

The protein resides in the cytoplasm. It carries out the reaction tRNA(Ile) + L-isoleucine + ATP = L-isoleucyl-tRNA(Ile) + AMP + diphosphate. Catalyzes the attachment of isoleucine to tRNA(Ile). As IleRS can inadvertently accommodate and process structurally similar amino acids such as valine, to avoid such errors it has two additional distinct tRNA(Ile)-dependent editing activities. One activity is designated as 'pretransfer' editing and involves the hydrolysis of activated Val-AMP. The other activity is designated 'posttransfer' editing and involves deacylation of mischarged Val-tRNA(Ile). This chain is Isoleucine--tRNA ligase, found in Bacillus cereus (strain B4264).